Consider the following 347-residue polypeptide: GMP reductase (347 aa).

108–131 (DDFTKTRQILAMSTALRFICVDVA) is an NADP(+) binding site. K(+)-binding residues include G181 and G183. C186 acts as the Thioimidate intermediate in catalysis. 216–239 (IVGDGGCTCPGDVAKAFGGGADFV) contacts NADP(+).

The protein belongs to the IMPDH/GMPR family. GuaC type 1 subfamily. In terms of assembly, homotetramer.

It carries out the reaction IMP + NH4(+) + NADP(+) = GMP + NADPH + 2 H(+). In terms of biological role, catalyzes the irreversible NADPH-dependent deamination of GMP to IMP. It functions in the conversion of nucleobase, nucleoside and nucleotide derivatives of G to A nucleotides, and in maintaining the intracellular balance of A and G nucleotides. The chain is GMP reductase from Aeromonas salmonicida (strain A449).